Here is a 196-residue protein sequence, read N- to C-terminus: Peptidyl-tRNA hydrolase (196 aa).

Tyr-18 is a binding site for tRNA. The Proton acceptor role is filled by His-23. Positions 69, 71, and 117 each coordinate tRNA.

It belongs to the PTH family. As to quaternary structure, monomer.

Its subcellular location is the cytoplasm. The catalysed reaction is an N-acyl-L-alpha-aminoacyl-tRNA + H2O = an N-acyl-L-amino acid + a tRNA + H(+). Hydrolyzes ribosome-free peptidyl-tRNAs (with 1 or more amino acids incorporated), which drop off the ribosome during protein synthesis, or as a result of ribosome stalling. Functionally, catalyzes the release of premature peptidyl moieties from peptidyl-tRNA molecules trapped in stalled 50S ribosomal subunits, and thus maintains levels of free tRNAs and 50S ribosomes. The protein is Peptidyl-tRNA hydrolase of Vibrio campbellii (strain ATCC BAA-1116).